An 89-amino-acid polypeptide reads, in one-letter code: Putative protein p54 (89 aa).

This Acyrthosiphon pisum secondary endosymbiont phage 1 (Bacteriophage APSE-1) protein is Putative protein p54 (54).